A 411-amino-acid polypeptide reads, in one-letter code: CCA-adding enzyme (411 aa).

ATP contacts are provided by Gly8 and Arg11. 2 residues coordinate CTP: Gly8 and Arg11. Mg(2+) contacts are provided by Glu21 and Asp23. ATP contacts are provided by Arg91, Arg137, and Arg140. Arg91, Arg137, and Arg140 together coordinate CTP. The HD domain occupies 227-328; that stretch reads LGNQTMTRLS…MTIFQAFDCW (102 aa).

Belongs to the tRNA nucleotidyltransferase/poly(A) polymerase family. Bacterial CCA-adding enzyme type 2 subfamily. Mg(2+) serves as cofactor.

It catalyses the reaction a tRNA precursor + 2 CTP + ATP = a tRNA with a 3' CCA end + 3 diphosphate. The enzyme catalyses a tRNA with a 3' CCA end + 2 CTP + ATP = a tRNA with a 3' CCACCA end + 3 diphosphate. Catalyzes the addition and repair of the essential 3'-terminal CCA sequence in tRNAs without using a nucleic acid template. Adds these three nucleotides in the order of C, C, and A to the tRNA nucleotide-73, using CTP and ATP as substrates and producing inorganic pyrophosphate. tRNA 3'-terminal CCA addition is required both for tRNA processing and repair. Also involved in tRNA surveillance by mediating tandem CCA addition to generate a CCACCA at the 3' terminus of unstable tRNAs. While stable tRNAs receive only 3'-terminal CCA, unstable tRNAs are marked with CCACCA and rapidly degraded. The polypeptide is CCA-adding enzyme (Blochmanniella floridana).